The primary structure comprises 349 residues: Phosphoribosylformylglycinamidine cyclo-ligase (349 aa).

It belongs to the AIR synthase family.

Its subcellular location is the cytoplasm. The enzyme catalyses 2-formamido-N(1)-(5-O-phospho-beta-D-ribosyl)acetamidine + ATP = 5-amino-1-(5-phospho-beta-D-ribosyl)imidazole + ADP + phosphate + H(+). It functions in the pathway purine metabolism; IMP biosynthesis via de novo pathway; 5-amino-1-(5-phospho-D-ribosyl)imidazole from N(2)-formyl-N(1)-(5-phospho-D-ribosyl)glycinamide: step 2/2. The polypeptide is Phosphoribosylformylglycinamidine cyclo-ligase (Psychrobacter arcticus (strain DSM 17307 / VKM B-2377 / 273-4)).